A 598-amino-acid chain; its full sequence is Serine hydroxymethyltransferase 7 (598 aa).

The segment at 57-85 is disordered; that stretch reads QLLEQKAEKTTTVDEPKKDGGGGGDQKED. Residues 61 to 85 are compositionally biased toward basic and acidic residues; it reads QKAEKTTTVDEPKKDGGGGGDQKED. N6-(pyridoxal phosphate)lysine is present on lysine 370.

Belongs to the SHMT family. As to quaternary structure, homotetramer. Pyridoxal 5'-phosphate serves as cofactor.

Its subcellular location is the cytoplasm. The catalysed reaction is (6R)-5,10-methylene-5,6,7,8-tetrahydrofolate + glycine + H2O = (6S)-5,6,7,8-tetrahydrofolate + L-serine. It participates in one-carbon metabolism; tetrahydrofolate interconversion. Catalyzes the interconversion of serine and glycine. In Arabidopsis thaliana (Mouse-ear cress), this protein is Serine hydroxymethyltransferase 7 (SHM7).